Here is a 204-residue protein sequence, read N- to C-terminus: Ribonuclease HII (204 aa).

The RNase H type-2 domain maps to 17 to 204 (TLIAGVDEVG…KPVKKVLGLL (188 aa)). A divalent metal cation-binding residues include D23, E24, and D115.

Belongs to the RNase HII family. It depends on Mn(2+) as a cofactor. Requires Mg(2+) as cofactor.

The protein localises to the cytoplasm. The enzyme catalyses Endonucleolytic cleavage to 5'-phosphomonoester.. Endonuclease that specifically degrades the RNA of RNA-DNA hybrids. The protein is Ribonuclease HII of Psychromonas ingrahamii (strain DSM 17664 / CCUG 51855 / 37).